A 368-amino-acid chain; its full sequence is Cytochrome b (368 aa).

The next 4 helical transmembrane spans lie at phenylalanine 25 to methionine 45, tryptophan 69 to isoleucine 90, tryptophan 105 to leucine 125, and phenylalanine 170 to isoleucine 190. Residues histidine 75 and histidine 89 each contribute to the heme b site. 2 residues coordinate heme b: histidine 174 and histidine 188. A ubiquinone is bound at residue histidine 193. The next 4 helical transmembrane spans lie at tyrosine 218–threonine 238, leucine 280–histidine 300, leucine 312–threonine 332, and phenylalanine 339–proline 358.

The protein belongs to the cytochrome b family. The cytochrome bc1 complex contains 3 respiratory subunits (MT-CYB, CYC1 and UQCRFS1), 2 core proteins (UQCRC1 and UQCRC2) and probably 6 low-molecular weight proteins. It depends on heme b as a cofactor.

It localises to the mitochondrion inner membrane. Component of the ubiquinol-cytochrome c reductase complex (complex III or cytochrome b-c1 complex) that is part of the mitochondrial respiratory chain. The b-c1 complex mediates electron transfer from ubiquinol to cytochrome c. Contributes to the generation of a proton gradient across the mitochondrial membrane that is then used for ATP synthesis. This chain is Cytochrome b (MT-CYB), found in Notechis ater (Black tiger snake).